Consider the following 1058-residue polypeptide: Leucine-rich repeat and coiled-coil domain-containing protein PF3D7_0703800 (1058 aa).

The segment covering 1–10 has biased composition (basic residues); sequence MAIKKKKKET. The interval 1 to 34 is disordered; it reads MAIKKKKKETKSKDNNNDNLRNEKKSTNLENGKY. Basic and acidic residues predominate over residues 11–34; the sequence is KSKDNNNDNLRNEKKSTNLENGKY. Residues 515 to 544 are a coiled coil; it reads LKQLYTFIKNYENNNDKLNIKSQIINKDKN. Residues 641-661 are compositionally biased toward basic and acidic residues; sequence ENKDHLQHEEHTHEEEPKDAN. Disordered regions lie at residues 641–665 and 706–728; these read ENKD…GDMV and NIED…ENMK. The stretch at 872 to 905 forms a coiled coil; sequence NYDHTQENILKNKNNMEDQNNLLEQNIMTDQLQN.

The protein is Leucine-rich repeat and coiled-coil domain-containing protein PF3D7_0703800 of Plasmodium falciparum (isolate 3D7).